A 130-amino-acid polypeptide reads, in one-letter code: Small ribosomal subunit protein uS8 (130 aa).

This sequence belongs to the universal ribosomal protein uS8 family. As to quaternary structure, part of the 30S ribosomal subunit. Contacts proteins S5 and S12.

One of the primary rRNA binding proteins, it binds directly to 16S rRNA central domain where it helps coordinate assembly of the platform of the 30S subunit. The sequence is that of Small ribosomal subunit protein uS8 from Pseudoalteromonas atlantica (strain T6c / ATCC BAA-1087).